Reading from the N-terminus, the 517-residue chain is Rop guanine nucleotide exchange factor 9 (517 aa).

2 disordered regions span residues 16–76 (NLDR…SETE) and 428–517 (GEET…KDRH). The segment covering 39–63 (MPESQTQDSLGGSPVETSRPMTSRL) has biased composition (polar residues). The PRONE domain occupies 65–429 (SRRQDKQQSE…SLARKQCTGE (365 aa)). The segment covering 66–76 (RRQDKQQSETE) has biased composition (basic and acidic residues). Over residues 440–452 (ETDSASAGSSNYS) the composition is skewed to polar residues.

As to quaternary structure, interacts with ARAC11/ROP1 and ARAC10/ROP11. Interacts with PRK6. As to expression, expressed in pollen grains and pollen tubes.

The protein resides in the cell membrane. Functionally, guanine-nucleotide exchange factor (GEF) that acts as an activator of Rop (Rho of plants) GTPases by promoting the exchange of GDP for GTP. This chain is Rop guanine nucleotide exchange factor 9, found in Arabidopsis thaliana (Mouse-ear cress).